The following is a 261-amino-acid chain: MTKFIGCIDLHNGEVKQIVGGTLTSKKEDVPKTNFVSQHPSSYYAKLYKDRDVQGCHVIKLGPNNDDAAREALQESPQFLQVGGGINDTNCLEWLKWASKVIVTSWLFTKEGHFQLKRLERLTELCGKDRIVVDLSCRKTQDGRWIVAMNKWQTLTDLELNADTFRELRKYTNEFLIHAADVEGLCGGIDELLVSKLFEWTKDYDDLKIVYAGGAKSVDDLKLVDELSHGKVDLTFGSSLDIFGGNLVKFEDCCRWNEKQG.

This sequence belongs to the HisA/HisF family.

It is found in the cytoplasm. The enzyme catalyses 1-(5-phospho-beta-D-ribosyl)-5-[(5-phospho-beta-D-ribosylamino)methylideneamino]imidazole-4-carboxamide = 5-[(5-phospho-1-deoxy-D-ribulos-1-ylimino)methylamino]-1-(5-phospho-beta-D-ribosyl)imidazole-4-carboxamide. Its pathway is amino-acid biosynthesis; L-histidine biosynthesis; L-histidine from 5-phospho-alpha-D-ribose 1-diphosphate: step 4/9. Catalyzes the isomerization of the aminoaldose moiety of ProFAR to the aminoketose of PRFAR. This is 1-(5-phosphoribosyl)-5-[(5-phosphoribosylamino)methylideneamino] imidazole-4-carboxamide isomerase from Saccharomyces cerevisiae (strain ATCC 204508 / S288c) (Baker's yeast).